A 91-amino-acid polypeptide reads, in one-letter code: Small ribosomal subunit protein bS20 (91 aa).

Positions 1–21 (MPLHKSAEKRLRQAARRNERN) are enriched in basic and acidic residues. The disordered stretch occupies residues 1–24 (MPLHKSAEKRLRQAARRNERNRAR).

Belongs to the bacterial ribosomal protein bS20 family.

Functionally, binds directly to 16S ribosomal RNA. The sequence is that of Small ribosomal subunit protein bS20 from Chlorobaculum parvum (strain DSM 263 / NCIMB 8327) (Chlorobium vibrioforme subsp. thiosulfatophilum).